A 56-amino-acid polypeptide reads, in one-letter code: RGICSEPKVVGPCKAGLRRFYYDSETGECKPFIYGGCKGNKNNFETLHACRGICRA.

The BPTI/Kunitz inhibitor domain occupies C4–C54. 3 disulfide bridges follow: C4/C54, C13/C37, and C29/C50.

Belongs to the venom Kunitz-type family. Sea anemone type 2 potassium channel toxin subfamily. Contains 3 disulfide bonds.

The protein resides in the secreted. The protein localises to the nematocyst. Dual-function toxin that inhibits both serine proteases and voltage-gated potassium channels. Has potent activity on both trypsin (Ki=28 nM) and chymotrypsin (Kd=1.8 nM). Shows inhibitory activity against 4 of the 7 potassium channels tested (rKv1.1/KCNA1; IC(50)=142.6 nM, hKv1.3/KCNA3; IC(50)=40.7 nM, rKv1.6/KCNA6; IC(50)=154.9 nM and drosophila Shaker; IC(50)=433.1 nM). Has an anti-inflammatory effect in LPS-activated macrophages in vitro, specifically reducing release of TNF and IL6 but not nitric oxide and reducing expression of IL1B precursor. In contrast to some paralogs, this protein decreases reactive oxygen species (ROS) level in the oxidative stress agent 6-hydroxydopamine (6-OHDA)-induced neurotoxicity model, but does not show cytoprotective activity on neuroblastoma cells. This protein also shows a weak free-radical scavenging activity. In vivo, when tested in a mice model of acute local inflammation, it reduces paw edema during 24 hours. In addition, it also reduces the synthesis of TNF in this model. This Radianthus crispa (Leathery sea anemone) protein is PI-stichotoxin-Hcr2f.